We begin with the raw amino-acid sequence, 86 residues long: Anti-adapter protein IraP (86 aa).

A coiled-coil region spans residues M1 to M47.

Belongs to the IraP family. As to quaternary structure, interacts with RssB.

It localises to the cytoplasm. Functionally, inhibits RpoS proteolysis by regulating RssB activity, thereby increasing the stability of the sigma stress factor RpoS especially during phosphate and magnesium starvation, but also in stationary phase and during nitrogen starvation. Its effect on RpoS stability is due to its interaction with RssB, which probably blocks the interaction of RssB with RpoS, and the consequent delivery of the RssB-RpoS complex to the ClpXP protein degradation pathway. The sequence is that of Anti-adapter protein IraP from Salmonella arizonae (strain ATCC BAA-731 / CDC346-86 / RSK2980).